A 333-amino-acid chain; its full sequence is Sphingomyelinase C (333 aa).

The first 27 residues, 1–27 (MKGKLLKGVLSFGIGLGVLYGGSSVQA), serve as a signal peptide directing secretion. A disulfide bridge links Cys150 with Cys186.

It belongs to the neutral sphingomyelinase family. Requires Mg(2+) as cofactor.

Its subcellular location is the secreted. The catalysed reaction is a sphingomyelin + H2O = phosphocholine + an N-acylsphing-4-enine + H(+). Its activity is regulated as follows. Activated by cobalt and manganese ions. Its function is as follows. Required, with sphingomyelinase, to effect target cell lysis (hemolysis). This Bacillus cereus protein is Sphingomyelinase C (sph).